A 357-amino-acid chain; its full sequence is Homoserine O-succinyltransferase (357 aa).

Cys146 functions as the Acyl-thioester intermediate in the catalytic mechanism. The substrate site is built by Lys167 and Ser196. His239 (proton acceptor) is an active-site residue. Residue Glu241 is part of the active site. Residue Arg253 coordinates substrate.

It belongs to the MetA family.

The protein resides in the cytoplasm. It carries out the reaction L-homoserine + succinyl-CoA = O-succinyl-L-homoserine + CoA. The protein operates within amino-acid biosynthesis; L-methionine biosynthesis via de novo pathway; O-succinyl-L-homoserine from L-homoserine: step 1/1. Transfers a succinyl group from succinyl-CoA to L-homoserine, forming succinyl-L-homoserine. This chain is Homoserine O-succinyltransferase, found in Allochromatium vinosum (strain ATCC 17899 / DSM 180 / NBRC 103801 / NCIMB 10441 / D) (Chromatium vinosum).